A 599-amino-acid polypeptide reads, in one-letter code: Flap endonuclease GEN-like 1 (599 aa).

The tract at residues 1–96 (MGVGGNFWDL…ISRFFRSSGI (96 aa)) is N-domain. Residues 2-95 (GVGGNFWDLL…RISRFFRSSG (94 aa)) are XPG-N domain. Mg(2+)-binding residues include Asp31, Asp75, Glu140, Glu142, Asp161, Asp163, and Asp213. Residues 128–213 (ELLGIPVLKA…IAISLLVGND (86 aa)) form an XPG-I domain region. The segment at 128–217 (ELLGIPVLKA…LLVGNDYDSG (90 aa)) is I-domain. Residues 213 to 407 (DYDSGGVLGI…LLPMLSTIYL (195 aa)) form a 5'-3' exonuclease domain region. Disordered stretches follow at residues 522–545 (RESK…MGVQ) and 559–599 (AAGQ…LLFG). 2 stretches are compositionally biased toward polar residues: residues 563 to 572 (SIETGGSSKA) and 580 to 590 (ATSTSSSNLTK).

It belongs to the XPG/RAD2 endonuclease family. GEN subfamily. The cofactor is Mg(2+).

The protein resides in the nucleus. Its function is as follows. Endonuclease which cleaves flap structures at the junction between single-stranded DNA and double-stranded DNA with a specific cleavage site in the 5' overhang strand exactly one nucleotide 3' of the branch point. Structure- and sequence-specific nuclease that resolves holliday junctions (HJs) by symmetrically oriented incisions in two opposing strands near the junction point, thus leading to ligatable products; HJs are physical links between homologous DNA molecules that arise as central intermediary structures during homologous recombination and repair in meiotic and somatic cells. Structure-specific nuclease with 5'-flap endonuclease activity, preferentially cleaving static flaps 5' overhang strand exactly one nucleotide in the 3' direction of the branch point. Also able to cleave double-stranded flap strand 1 exactly at the branch point. The sequence is that of Flap endonuclease GEN-like 1 from Arabidopsis thaliana (Mouse-ear cress).